The sequence spans 306 residues: Pyridoxal 5'-phosphate synthase subunit PdxS (306 aa).

Asp36 contributes to the D-ribose 5-phosphate binding site. The active-site Schiff-base intermediate with D-ribose 5-phosphate is the Lys93. Gly165 serves as a coordination point for D-ribose 5-phosphate. Arg177 provides a ligand contact to D-glyceraldehyde 3-phosphate. Residues Gly226 and Gly247–Ser248 each bind D-ribose 5-phosphate.

The protein belongs to the PdxS/SNZ family. In terms of assembly, in the presence of PdxT, forms a dodecamer of heterodimers.

The catalysed reaction is aldehydo-D-ribose 5-phosphate + D-glyceraldehyde 3-phosphate + L-glutamine = pyridoxal 5'-phosphate + L-glutamate + phosphate + 3 H2O + H(+). The protein operates within cofactor biosynthesis; pyridoxal 5'-phosphate biosynthesis. In terms of biological role, catalyzes the formation of pyridoxal 5'-phosphate from ribose 5-phosphate (RBP), glyceraldehyde 3-phosphate (G3P) and ammonia. The ammonia is provided by the PdxT subunit. Can also use ribulose 5-phosphate and dihydroxyacetone phosphate as substrates, resulting from enzyme-catalyzed isomerization of RBP and G3P, respectively. This chain is Pyridoxal 5'-phosphate synthase subunit PdxS, found in Corynebacterium urealyticum (strain ATCC 43042 / DSM 7109).